The sequence spans 607 residues: MHYRPSPTRIIPRCSNMEILREKLSLLPDKPGVYLMKDASGQIIYVGKAKVLKNRVRSYFTGSHNGKTQLMISLIADFETIITDSEVEALLLECNLIKKHNPKYNILLRDDKTYPFITITDEAHPRILVTRQVKKGAGKYYGPYPNATAAKEAARLLNRLFPFRKCRQIPNKPCLYYHLGQCLGPCQVDVPKEAYDKIRKEAAAFLKGDQGAILKALEKKMKEASENLEFERAKEYRDLMEDLKKVGEKQNITLNDFVDRDVVGYAYTQDQLCIQIFYLRQGKLLSRDNFIFPYYEEPEEAFVSFLAQFYTESSALPQEILLPPLDISVLTKLFPMVVPQKGQKRDLVQMAMENAQTTLHEQISIEIRNLTECTQALAEIGNALGIPSLRTIESFDISNIAGTHSVAGMIQFLDGKPNRSQYRKFKIQPMPNMDDTASMHQVIERRYARLQQENLPLPDLILVDGGKGQIHAALAALHSLNAAIPVAGMVKNDKHQTSALIDAMDRIHSLDRRSAGFRLLERIQNEVHRFAITFHRQQRAKSMTLSELDGIAGVGPKRRQQLLKFFKSIDSIRQATLEELQQSGLPAPAAAAVYQHFNSHKEENHDS.

Positions 29-106 constitute a GIY-YIG domain; sequence DKPGVYLMKD…IKKHNPKYNI (78 aa). The UVR domain occupies 211-246; that stretch reads GAILKALEKKMKEASENLEFERAKEYRDLMEDLKKV.

The protein belongs to the UvrC family. Interacts with UvrB in an incision complex.

The protein resides in the cytoplasm. In terms of biological role, the UvrABC repair system catalyzes the recognition and processing of DNA lesions. UvrC both incises the 5' and 3' sides of the lesion. The N-terminal half is responsible for the 3' incision and the C-terminal half is responsible for the 5' incision. The sequence is that of UvrABC system protein C from Desulfitobacterium hafniense (strain Y51).